The chain runs to 307 residues: Elongation factor Ts (307 aa).

The involved in Mg(2+) ion dislocation from EF-Tu stretch occupies residues 80-83 (TDFV).

This sequence belongs to the EF-Ts family.

Its subcellular location is the cytoplasm. Functionally, associates with the EF-Tu.GDP complex and induces the exchange of GDP to GTP. It remains bound to the aminoacyl-tRNA.EF-Tu.GTP complex up to the GTP hydrolysis stage on the ribosome. This Xanthobacter autotrophicus (strain ATCC BAA-1158 / Py2) protein is Elongation factor Ts.